The sequence spans 312 residues: Speedy protein A (312 aa).

Positions 67–199 (RQEMTAFFKL…SHYIWQRERS (133 aa)) are speedy/Ringo box; Required for CDK-binding. A Phosphoserine modification is found at Ser221. Thr223 is subject to Phosphothreonine.

It belongs to the Speedy/Ringo family. As to quaternary structure, interacts with CDK1. Interacts with CDK2. May interact with CDKN1B/KIP1. Identified in a complex with CDK2 and CDKN1B/KIP1, where it interacts primarily with CDK2.

It is found in the nucleus. Its function is as follows. Regulates the G1/S phase transition of the cell cycle by binding and activating CDK1 and CDK2. Contributes to CDK2 activation without promoting CDK2 phosphorylation, by inducing a conformation change of the CDK2 T-loop that obstructs the substrate-binding cleft prior to kinase activation. Interferes with CDKN1B-mediated inhibition of CDK2. Mediates cell survival during the DNA damage process through activation of CDK2. This Rattus norvegicus (Rat) protein is Speedy protein A.